The sequence spans 346 residues: Mannonate dehydratase (346 aa).

Belongs to the mannonate dehydratase family. Fe(2+) serves as cofactor. Mn(2+) is required as a cofactor.

It catalyses the reaction D-mannonate = 2-dehydro-3-deoxy-D-gluconate + H2O. Its pathway is carbohydrate metabolism; pentose and glucuronate interconversion. Functionally, catalyzes the dehydration of D-mannonate. The protein is Mannonate dehydratase of Cupriavidus taiwanensis (strain DSM 17343 / BCRC 17206 / CCUG 44338 / CIP 107171 / LMG 19424 / R1) (Ralstonia taiwanensis (strain LMG 19424)).